The chain runs to 750 residues: Photosystem I P700 chlorophyll a apoprotein A1 (750 aa).

8 helical membrane-spanning segments follow: residues 70–93 (VFSA…FHGA), 156–179 (LYCT…FHYH), 195–219 (LNHH…HVSL), 291–309 (IAHH…GHMY), 346–369 (WHAQ…HHMY), 385–411 (LSLF…IFMV), 433–455 (AIIS…LYIH), and 531–549 (FLVH…LILL). [4Fe-4S] cluster contacts are provided by Cys-573 and Cys-582. 2 consecutive transmembrane segments (helical) span residues 589–610 (HVFL…HFSW) and 664–686 (LSAY…MFLF). His-675 provides a ligand contact to chlorophyll a'. The chlorophyll a site is built by Met-683 and Tyr-691. Phylloquinone is bound at residue Trp-692. The chain crosses the membrane as a helical span at residues 724-744 (AVGVTHYLLGGIATTWAFFLA).

This sequence belongs to the PsaA/PsaB family. As to quaternary structure, the PsaA/B heterodimer binds the P700 chlorophyll special pair and subsequent electron acceptors. PSI consists of a core antenna complex that captures photons, and an electron transfer chain that converts photonic excitation into a charge separation. The eukaryotic PSI reaction center is composed of at least 11 subunits. P700 is a chlorophyll a/chlorophyll a' dimer, A0 is one or more chlorophyll a, A1 is one or both phylloquinones and FX is a shared 4Fe-4S iron-sulfur center. is required as a cofactor.

Its subcellular location is the plastid. The protein localises to the chloroplast thylakoid membrane. It catalyses the reaction reduced [plastocyanin] + hnu + oxidized [2Fe-2S]-[ferredoxin] = oxidized [plastocyanin] + reduced [2Fe-2S]-[ferredoxin]. Functionally, psaA and PsaB bind P700, the primary electron donor of photosystem I (PSI), as well as the electron acceptors A0, A1 and FX. PSI is a plastocyanin-ferredoxin oxidoreductase, converting photonic excitation into a charge separation, which transfers an electron from the donor P700 chlorophyll pair to the spectroscopically characterized acceptors A0, A1, FX, FA and FB in turn. Oxidized P700 is reduced on the lumenal side of the thylakoid membrane by plastocyanin. The polypeptide is Photosystem I P700 chlorophyll a apoprotein A1 (Aethionema grandiflorum (Persian stone-cress)).